Reading from the N-terminus, the 73-residue chain is Translation initiation factor IF-1 (73 aa).

The 73-residue stretch at Met1–Lys73 folds into the S1-like domain.

The protein belongs to the IF-1 family. Component of the 30S ribosomal translation pre-initiation complex which assembles on the 30S ribosome in the order IF-2 and IF-3, IF-1 and N-formylmethionyl-tRNA(fMet); mRNA recruitment can occur at any time during PIC assembly.

Its subcellular location is the cytoplasm. Its function is as follows. One of the essential components for the initiation of protein synthesis. Stabilizes the binding of IF-2 and IF-3 on the 30S subunit to which N-formylmethionyl-tRNA(fMet) subsequently binds. Helps modulate mRNA selection, yielding the 30S pre-initiation complex (PIC). Upon addition of the 50S ribosomal subunit IF-1, IF-2 and IF-3 are released leaving the mature 70S translation initiation complex. The polypeptide is Translation initiation factor IF-1 (Streptomyces coelicolor (strain ATCC BAA-471 / A3(2) / M145)).